A 162-amino-acid chain; its full sequence is NADPH-dependent 7-cyano-7-deazaguanine reductase (162 aa).

The active-site Thioimide intermediate is the Cys-53. Asp-60 serves as the catalytic Proton donor. Residues 75-77 (VES) and 94-95 (HE) contribute to the substrate site.

Belongs to the GTP cyclohydrolase I family. QueF type 1 subfamily.

The protein localises to the cytoplasm. It carries out the reaction 7-aminomethyl-7-carbaguanine + 2 NADP(+) = 7-cyano-7-deazaguanine + 2 NADPH + 3 H(+). Its pathway is tRNA modification; tRNA-queuosine biosynthesis. In terms of biological role, catalyzes the NADPH-dependent reduction of 7-cyano-7-deazaguanine (preQ0) to 7-aminomethyl-7-deazaguanine (preQ1). The protein is NADPH-dependent 7-cyano-7-deazaguanine reductase of Streptococcus mutans serotype c (strain ATCC 700610 / UA159).